The chain runs to 215 residues: 3,4-dihydroxy-2-butanone 4-phosphate synthase (215 aa).

D-ribulose 5-phosphate-binding positions include 38-39, D43, 151-155, and E175; these read RE and RRGHT. E39 is a Mg(2+) binding site. H154 contributes to the Mg(2+) binding site.

This sequence belongs to the DHBP synthase family. Homodimer. Mg(2+) serves as cofactor. The cofactor is Mn(2+).

It catalyses the reaction D-ribulose 5-phosphate = (2S)-2-hydroxy-3-oxobutyl phosphate + formate + H(+). The protein operates within cofactor biosynthesis; riboflavin biosynthesis; 2-hydroxy-3-oxobutyl phosphate from D-ribulose 5-phosphate: step 1/1. Functionally, catalyzes the conversion of D-ribulose 5-phosphate to formate and 3,4-dihydroxy-2-butanone 4-phosphate. This Haemophilus influenzae (strain 86-028NP) protein is 3,4-dihydroxy-2-butanone 4-phosphate synthase.